A 105-amino-acid polypeptide reads, in one-letter code: Large ribosomal subunit protein bL21 (105 aa).

This sequence belongs to the bacterial ribosomal protein bL21 family. Part of the 50S ribosomal subunit. Contacts protein L20.

Functionally, this protein binds to 23S rRNA in the presence of protein L20. The sequence is that of Large ribosomal subunit protein bL21 from Rickettsia typhi (strain ATCC VR-144 / Wilmington).